The chain runs to 186 residues: Homeobox expressed in ES cells 1 (186 aa).

The segment at residues 109-168 (GRRPRTAFTRSQIEILENVFRVNSYPGIDIREELAGKLALDEDRIQIWFQNRRAKLKRSH) is a DNA-binding region (homeobox).

Belongs to the ANF homeobox family. As to quaternary structure, interacts (via N-terminus) with zyx.

It localises to the nucleus. Functionally, regulates the earliest stages of development of the anterior neural plate. Plays a role in forebrain development by inhibiting the expression of otx2 and pax6 in the rostral region of the anterior neural plate. Necessary for both neural differentiation and neural patterning. Controls Spemann organizer development. May act as a transcriptional repressor. The polypeptide is Homeobox expressed in ES cells 1 (Xenopus tropicalis (Western clawed frog)).